A 442-amino-acid chain; its full sequence is Cyclic adenylate deaminase (442 aa).

The protein belongs to the metallo-dependent hydrolases superfamily. Adenosine and AMP deaminases family. The cofactor is Zn(2+).

It catalyses the reaction 3',5'-cyclic AMP + H2O + H(+) = 3',5'-cyclic IMP + NH4(+). In terms of biological role, deaminates cAMP into cIMP, thereby repressing cAMP dependent metabolism or genes. This chain is Cyclic adenylate deaminase (add), found in Leptospira interrogans serogroup Icterohaemorrhagiae serovar copenhageni (strain Fiocruz L1-130).